We begin with the raw amino-acid sequence, 280 residues long: MASSSFSVTSPAAAASVYAVTQTSSHFPIQNRSRRVSFRLSAKPKLRFLSKPSRSSYPVVKAQSNKVSTGASSNAAKVDGPSSAEGKEKNSLKESSASSPELATEESISEFLTQVTTLVKLVDSRDIVELQLKQLDCELVIRKKEALPQPQAPASYVMMQQPNQPSYAQQMAPPAAPAAAAPAPSTPASLPPPSPPTPAKSSLPTVKSPMAGTFYRSPAPGEPPFIKVGDKVQKGQVLCIVEAMKLMNEIESDHTGTVVDIVAEDGKPVSLDTPLFVVQP.

The N-terminal 82 residues, 1 to 82 (MASSSFSVTS…SNAAKVDGPS (82 aa)), are a transit peptide targeting the chloroplast. A compositionally biased stretch (polar residues) spans 52–75 (PSRSSYPVVKAQSNKVSTGASSNA). Disordered stretches follow at residues 52 to 106 (PSRS…ATEE) and 164 to 215 (QPSY…GTFY). The span at 177-188 (PAAAAPAPSTPA) shows a compositional bias: low complexity. Positions 189 to 198 (SLPPPSPPTP) are enriched in pro residues. A Biotinyl-binding domain is found at 203 to 279 (LPTVKSPMAG…SLDTPLFVVQ (77 aa)). Lysine 245 is subject to N6-biotinyllysine.

Acetyl-CoA carboxylase is a heterohexamer composed of biotin carboxyl carrier protein, biotin carboxylase and 2 subunits each of ACCase subunit alpha and ACCase plastid-coded subunit beta (accD). In terms of tissue distribution, present in developing tissues from roots, leaves, flowers, siliques and seeds (at protein level).

It localises to the plastid. Its subcellular location is the chloroplast. Its pathway is lipid metabolism; fatty acid biosynthesis. This protein is a component of the acetyl coenzyme A carboxylase complex; first, biotin carboxylase catalyzes the carboxylation of the carrier protein and then the transcarboxylase transfers the carboxyl group to form malonyl-CoA. This is Biotin carboxyl carrier protein of acetyl-CoA carboxylase 1, chloroplastic (BCCP1) from Arabidopsis thaliana (Mouse-ear cress).